The primary structure comprises 494 residues: Cytochrome P450 2C23 (494 aa).

Ser-131 bears the Phosphoserine mark. Residues Lys-253 and Lys-379 each carry the N6-acetyllysine modification. Residue Cys-439 participates in heme binding.

It belongs to the cytochrome P450 family. Requires heme as cofactor. As to expression, expressed in kidney and liver. Expressed in cortical tubules of kidney (at protein level).

It is found in the endoplasmic reticulum membrane. The protein localises to the microsome membrane. It carries out the reaction (5Z,8Z,11Z,14Z)-eicosatetraenoate + reduced [NADPH--hemoprotein reductase] + O2 = (8R,9S)-epoxy-(5Z,11Z,14Z)-eicosatrienoate + oxidized [NADPH--hemoprotein reductase] + H2O + H(+). It catalyses the reaction (5Z,8Z,11Z,14Z)-eicosatetraenoate + reduced [NADPH--hemoprotein reductase] + O2 = (11R,12S)-epoxy-(5Z,8Z,14Z)-eicosatrienoate + oxidized [NADPH--hemoprotein reductase] + H2O + H(+). The enzyme catalyses (5Z,8Z,11Z,14Z)-eicosatetraenoate + reduced [NADPH--hemoprotein reductase] + O2 = (11S,12R)-epoxy-(5Z,8Z,14Z)-eicosatrienoate + oxidized [NADPH--hemoprotein reductase] + H2O + H(+). The catalysed reaction is (5Z,8Z,11Z,14Z)-eicosatetraenoate + reduced [NADPH--hemoprotein reductase] + O2 = (14R,15S)-epoxy-(5Z,8Z,11Z)-eicosatrienoate + oxidized [NADPH--hemoprotein reductase] + H2O + H(+). It carries out the reaction (5Z,8Z,11Z,14Z)-eicosatetraenoate + reduced [NADPH--hemoprotein reductase] + O2 = (14S,15R)-epoxy-(5Z,8Z,11Z)-eicosatrienoate + oxidized [NADPH--hemoprotein reductase] + H2O + H(+). It catalyses the reaction (5Z,8Z,11Z,14Z,17Z)-eicosapentaenoate + reduced [NADPH--hemoprotein reductase] + O2 = 8,9-epoxy-(5Z,11Z,14Z,17Z)-eicosatetraenoate + oxidized [NADPH--hemoprotein reductase] + H2O + H(+). The enzyme catalyses (5Z,8Z,11Z,14Z,17Z)-eicosapentaenoate + reduced [NADPH--hemoprotein reductase] + O2 = 11,12-epoxy-(5Z,8Z,14Z,17Z)-eicosatetraenoate + oxidized [NADPH--hemoprotein reductase] + H2O + H(+). The catalysed reaction is (5Z,8Z,11Z,14Z,17Z)-eicosapentaenoate + reduced [NADPH--hemoprotein reductase] + O2 = 14,15-epoxy-(5Z,8Z,11Z,17Z)-eicosatetraenoate + oxidized [NADPH--hemoprotein reductase] + H2O + H(+). It carries out the reaction (5Z,8Z,11Z,14Z,17Z)-eicosapentaenoate + reduced [NADPH--hemoprotein reductase] + O2 = (17R,18S)-epoxy-(5Z,8Z,11Z,14Z)-eicosatetraenoate + oxidized [NADPH--hemoprotein reductase] + H2O + H(+). It catalyses the reaction (5Z,8Z,11Z,14Z,17Z)-eicosapentaenoate + reduced [NADPH--hemoprotein reductase] + O2 = (17S,18R)-epoxy-(5Z,8Z,11Z,14Z)-eicosatetraenoate + oxidized [NADPH--hemoprotein reductase] + H2O + H(+). The enzyme catalyses 20-hydroxy-(5Z,8Z,11Z,14Z)-eicosatetraenoate + reduced [NADPH--hemoprotein reductase] + O2 = 20-hydroxy-8,9-epoxy-(5Z,11Z,14Z)-eicosatrienoate + oxidized [NADPH--hemoprotein reductase] + H2O + H(+). Its pathway is lipid metabolism; arachidonate metabolism. Its function is as follows. A cytochrome P450 monooxygenase involved in polyunsaturated fatty acids (PUFAs) metabolism and signaling. Catalyzes preferentially the epoxidation of double bonds of PUFAs. Converts arachidonic acid (ARA, C20:4(n-6)) primarily to stereospecific products 8R,9S-, 11R,12S-, and 14S,15R-EET. Plays a major role in the formation of EETs and hydroxy-EETs (HEETs) in kidney. Via EETs may inhibit the epithelial sodium channels (ENaCs) in nephron segments, preventing excessive sodium absorption during high dietary salt intake. Participates in the formation of anti-inflammatory hydroxyepoxyeicosatrienoic acids (HEETs) by converting 20-hydroxyeicosatetraenoic acid (20-HETE) to 20,8,9-HEET, an activator of PPARA. Metabolizes eicosapentaenoic acid (EPA, C20:5(n-3)) to epoxyeicosatetraenoic acid (EETeTr) regioisomers, 8,9-, 11,12-, 14,15-, and 17,18-EETeTr, preferentially producing 17R,18S enantiomer. Mechanistically, uses molecular oxygen inserting one oxygen atom into a substrate, and reducing the second into a water molecule, with two electrons provided by NADPH via cytochrome P450 reductase (NADPH--hemoprotein reductase). The protein is Cytochrome P450 2C23 of Rattus norvegicus (Rat).